The following is a 296-amino-acid chain: 4-hydroxy-tetrahydrodipicolinate synthase (296 aa).

Thr-49 contacts pyruvate. Tyr-137 (proton donor/acceptor) is an active-site residue. The active-site Schiff-base intermediate with substrate is Lys-166. A pyruvate-binding site is contributed by Ile-208.

It belongs to the DapA family. Homotetramer; dimer of dimers.

The protein localises to the cytoplasm. The enzyme catalyses L-aspartate 4-semialdehyde + pyruvate = (2S,4S)-4-hydroxy-2,3,4,5-tetrahydrodipicolinate + H2O + H(+). Its pathway is amino-acid biosynthesis; L-lysine biosynthesis via DAP pathway; (S)-tetrahydrodipicolinate from L-aspartate: step 3/4. Catalyzes the condensation of (S)-aspartate-beta-semialdehyde [(S)-ASA] and pyruvate to 4-hydroxy-tetrahydrodipicolinate (HTPA). The sequence is that of 4-hydroxy-tetrahydrodipicolinate synthase from Chlorobium chlorochromatii (strain CaD3).